The following is a 916-amino-acid chain: MAEEIDDNEFYRENFSADSDWEVFNAQLGEILQKWDVSSDSETRNLKSEEIFSCNWKVEREKLDMLRNGIEVEYHQAILEDEELVRAEAKEITCLQRTSCHHDLMSTGNSFGPPIRSSQELHILARIYGLRRFIVLHPVNPTLNYMRSTSEFNFFLSAVAVVSAEVQSLVPIFVQIYDPKWNYYTGVALAPALRTNFRLIGLEKAPPECRFLMGLLTLFREKVPTSYTQAAMISVCTTYALDTMRIRMPMYVPFDHGLSSEDIVVDGEVSHLEVQQFCALPHGYKPESRTEIYLVYTWPELSEHVAFDSEQRSDFVPAKAPLGKIYLSVEASSYLSCCLRDYQSVAEVTRSLESFVGRNFSGTSSGAEAASNPLDRITEHKLTKRRERSFELPSQAGLTKRLPGPMTESELSELLAYLFPDMHPEMALFPYAKKNFTDKFDPMRIKSAVPDSLVCRLSCLLATCHAHLGSVEGMAQVWAAFTRQLRLLWDNSLMVPGISAGFPDTRTCLLHQKLQMLNVCVERRVQREANSKRKSEGMVGKASSEEEEDEDDDEGEFFDCDDLTAGAGSPTKAVLSLKPEGRLRRLNNERLLEEPDEYLYIPDTQEPVPKTEDQLQDDAEVMLKLGPGSGLTTQMMCTSLLSDMEAFKAANPRGIMEDFIRWYSPKDWEEVTDELGQVKHQLSIRMTTEGNTWQKVWEQAQAVPVSRQKRLFDDTNEALKVLHYLETRKMHEIYNLTVIPLLHSAILKLADILSNAELEDLFSSQIEKLLSDLCRLSRSHSDELPSIKPLLDDLAELERRFYQFKCFERLSGYPKRSSLQQVKLQFEEILRNDNCCTIVNRRLTAAGDGTLYDILIPKLEEDMADRLISKDYIIRLDGDTKTTEKGLYLGPQFMRAIVTGEKLRLCGAFTESTAFV.

Positions 530–574 are disordered; that stretch reads NSKRKSEGMVGKASSEEEEDEDDDEGEFFDCDDLTAGAGSPTKAV. Phosphoserine is present on residues S543 and S544. Residues 545–562 are compositionally biased toward acidic residues; it reads EEEEDEDDDEGEFFDCDD.

It belongs to the Rab3-GAP catalytic subunit family. As to quaternary structure, the Rab3 GTPase-activating complex is a heterodimer composed of Rab3GAP1 and Rab3-GAP.

It localises to the cytoplasm. Functionally, catalytic subunit of the Rab3 GTPase-activating (Rab3GAP) complex composed of Rab3-GAP and Rab3GAP1, which has both GTPase-activating protein (GAP) activity towards Rab3, and guanine nucleotide exchange factor (GEF) activity towards Rab18. As part of the Rab3GAP complex, required for the rapid induction and sustained expression of synaptic homeostasis at the neuromuscular junction (NMJ). Also participates in the regulation of autophagy in tissues such as larval fat cells and adult muscles. The Rab3GAP complex, acts as a GAP for Rab3 by converting active Rab3-GTP to the inactive form Rab3-GDP. At the neuromuscular junction (NMJ), forms a presynaptic signaling mechanism with Rab3 that regulates progression of synaptic homeostasis at a late stage of vesicle release. Within this mechanism Rab3-GTP acts, directly or indirectly, to inhibit the progression of synaptic homeostasis, and Rab3-GAP functions to inactivate this action of Rab3-GTP. The Rab3GAP complex, acts as a GEF for Rab18 by promoting the conversion of inactive Rab18-GDP to the active form Rab18-GTP. Regulates autophagy as part of a Rab3GAP-Rab18 module. Once Rab18 is activated by the GEF Rab3GAP complex, the Rab3GAP-Rab18 module localizes to autophagosomes, and regulates autolysosome formation and maturation together with the Rab18 interacting effector, the PI3K/Vps34 Complex I. This Drosophila melanogaster (Fruit fly) protein is Rab3 GTPase-activating protein catalytic subunit.